A 933-amino-acid polypeptide reads, in one-letter code: MLKALFGDPNTRKIKKLQPIVAEINLLEEDIQHLSDEQLKEKTVEFREMLDKANNDEELEDILEEILPDAFAVVREAAKRVLGMRHFDVQLMGGMVLHQGQIAEMKTGEGKTLVATLPAYLNGLTSRGVHIVTVNDYLARRDAEWMGQVHRFLGLTVGLIQSGMNPEERKKNYACDVTYTTNSELGFDYLRDNMATAMAEVVQRPPNYCIIDEVDSILIDEARTPLIISGQVERPTEKYIKAAEIAKQLEKQESEEDPKDYEVDEKARNVLMTDQGFEKAEQLLGVGDLYDQENPWAHYIFNAIKAKELFTKDVNYIVKNKEVVIVDEFTGRVLAGRRWSDGLHQAIEAKEGVPIQRETQTLATITYQNFFLLYNKLSGMTGTAKTEETELEKVYNLQVTIVPTNRPSQRYDFPDVVYKTEPAKWKAVAAEVEEMHKMGRPILVGTTSVEKSEVISALLQQSNIPHNILNARPENVERESEIVAQAGRKGAVTIATNMAGRGTDIILGGNSDYMARLKIREYLMPQIVMPEDDNLMAGGMGSNNRRPQGFGQDSKKKKWQPSADIFPTDLSPETQNMLKEAVKFAVDQYGQQSLSELEAEEKIAIASENAPTDDPVIEKLREVYKLIRKQYDAFTDKEHDEVVDKGGLHVIATERHESRRIDNQLRGRAGRQGDPGSTKFFLSLEDNLLRIFGGDRVAGLMNAFRVEEDMPIESKMLTRSLEGAQKKVETFYYDTRKQVFEYDEVMNNQRRAIYAERRRVLEGLDLKEQVLQYAEKTMDEIVDAYVNPELPPEEWDVENLVSKVKEFVYLLEDITAKDMEDMTVAEMKIFLHEEVRKAYDIKEDQVDKVRPGLMREAERFFILQQIDTLWREHLQSMDALRESIGLRGYGQKDPLIEYKQEGYEMFLEMMIDIRRNVVYSLFQFQPQGQPQAV.

ATP-binding positions include Gln90, 108–112, and Asp504; that span reads GEGKT. The tract at residues 539–570 is disordered; the sequence is GMGSNNRRPQGFGQDSKKKKWQPSADIFPTDL.

It belongs to the SecA family. As to quaternary structure, monomer and homodimer. Part of the essential Sec protein translocation apparatus which comprises SecA, SecYEG and auxiliary proteins SecDF. Other proteins may also be involved.

Its subcellular location is the cell inner membrane. It is found in the cellular thylakoid membrane. The protein resides in the cytoplasm. The enzyme catalyses ATP + H2O + cellular proteinSide 1 = ADP + phosphate + cellular proteinSide 2.. Part of the Sec protein translocase complex. Interacts with the SecYEG preprotein conducting channel. Has a central role in coupling the hydrolysis of ATP to the transfer of proteins into and across the cell membrane, serving as an ATP-driven molecular motor driving the stepwise translocation of polypeptide chains across the membrane. In terms of biological role, probably participates in protein translocation into and across both the cytoplasmic and thylakoid membranes in cyanobacterial cells. The protein is Protein translocase subunit SecA of Crocosphaera subtropica (strain ATCC 51142 / BH68) (Cyanothece sp. (strain ATCC 51142)).